Consider the following 499-residue polypeptide: Neuronal acetylcholine receptor subunit alpha-3 (499 aa).

An N-terminal signal peptide occupies residues 1-25 (MGVVLLPPPLSMLMLVLMLLPAASA). Residues 26 to 244 (SEAEHRLFQY…PLFYTINLII (219 aa)) are Extracellular-facing. N-linked (GlcNAc...) asparagine glycosylation is found at asparagine 49 and asparagine 166. 2 disulfide bridges follow: cysteine 153–cysteine 167 and cysteine 217–cysteine 218. Residues 245–260 (PCLLISFLTVLVFYLP) traverse the membrane as a helical segment. The Cytoplasmic portion of the chain corresponds to 261-262 (SD). Residues 263-279 (CGEKVTLCISVLLSLTV) traverse the membrane as a helical segment. Position 265 (glutamate 265) interacts with Na(+). The Extracellular portion of the chain corresponds to 280–301 (FLLVITETIPSTSLVIPLIGEY). Residues 302-320 (LLFTMIFVTLSIVITVFVL) form a helical membrane-spanning segment. The Cytoplasmic segment spans residues 321–468 (NVHYRTPTTH…QDDWKYVAMV (148 aa)). Serine 407 and serine 410 each carry phosphoserine. A helical membrane pass occupies residues 469 to 487 (IDRIFLWVFILVCILGTAG). At 488 to 499 (LFLQPLMARDDT) the chain is on the extracellular side.

This sequence belongs to the ligand-gated ion channel (TC 1.A.9) family. Acetylcholine receptor (TC 1.A.9.1) subfamily. Alpha-3/CHRNA3 sub-subfamily. Neuronal AChR is composed of two different types of subunits: alpha and beta. CHRNA3/Alpha-3 subunit can be combined to CHRNB2/beta-2 or CHRNB4/beta-4 to give rise to functional receptors. Part of a complex composed of STUB1/CHIP, VCP/p97, CHRNA3, and UBXN2A that modulates the ubiquitination and endoplasmic reticulum-associated degradation (ERAD) of CHRNA3. Within the complex UBXN2A acts as a scaffold protein required for the interaction of CHRNA3 with VCP/p97, this interaction also inhibits CHRNA3 ubiquitination by STUB1/CHIP and subsequently ERAD. Interacts with UBXN2A (via SEP domain), the interaction is required for the interaction of CHRNA3 in the STUB1:VCP:UBXN2A complex. Interacts with RIC3; which is required for proper folding and assembly. Post-translationally, ubiquitinated; by STUB1/CHIP and thereafter degraded by the 26S proteosome complex. As to expression, expressed in neurons. Expressed in umbrella cells of urothelium (at protein level).

The protein resides in the synaptic cell membrane. Its subcellular location is the cell membrane. It is found in the endoplasmic reticulum. It localises to the golgi apparatus. It catalyses the reaction Ca(2+)(in) = Ca(2+)(out). It carries out the reaction K(+)(in) = K(+)(out). The catalysed reaction is Na(+)(in) = Na(+)(out). Activated by a myriad of ligands such as acetylcholine, cytisine, nicotine, choline and epibatidine. The heteropentamer CHRNA3:CHRNB2 activity is blocked by alpha-conotoxins ImI, ImII, PnIA, GID and MII. The heteropentamer CHRNA3:CHRNB4 activity is blocked by the alpha-conotoxin ImI and AuIB. Functionally, component of neuronal acetylcholine receptors (nAChRs) that function as pentameric, ligand-gated cation channels with high calcium permeability among other activities. nAChRs are excitatory neurotrasnmitter receptors formed by a collection of nAChR subunits known to mediate synaptic transmission in the nervous system and the neuromuscular junction. Each nAchR subunit confers differential attributes to channel properties, including activation, deactivation and desensitization kinetics, pH sensitivity, cation permeability, and binding to allosteric modulators. CHRNA3 forms heteropentameric neuronal acetylcholine receptors with CHRNB2 and CHRNB4. CHRNA3:CHRNB4 being predominant in neurons of the autonomic ganglia, it is known as ganglionic nicotinic receptor. CHRNA3:CHRNB4 also plays an important role in the habenulo-interpeduncular tract, modulating the mesolimbic dopamine system and affecting reward circuits and addiction. Hypothalamic CHRNA3:CHRNB4 nAChR activation by nicotine leads to activation of POMC neurons and a decrease in food intake. Also expressed in the urothelium where it modulates reflex bladder activity by increasing intracellular calcium through extracellular influx and basal ATP release. In Rattus norvegicus (Rat), this protein is Neuronal acetylcholine receptor subunit alpha-3 (Chrna3).